A 1032-amino-acid polypeptide reads, in one-letter code: Vacuolar membrane protease (1032 aa).

Residues 1 to 11 lie on the Cytoplasmic side of the membrane; that stretch reads MKLGNPFVFRP. A helical transmembrane segment spans residues 12–32; sequence GPVSFWTTIVYLAIIIPLIYV. Residues 33-415 are Vacuolar-facing; the sequence is QETVPPAPSE…SAFALRGLFA (383 aa). 3 N-linked (GlcNAc...) asparagine glycosylation sites follow: Asn50, Asn138, and Asn147. Positions 194 and 206 each coordinate Zn(2+). Glu240 serves as the catalytic Proton acceptor. Glu241, Glu266, and His339 together coordinate Zn(2+). Residues 416–436 form a helical membrane-spanning segment; the sequence is WTLTLLITTPLVLFVVTYLLV. Residues 437-469 are Cytoplasmic-facing; that stretch reads RDDKWYFFATKVDSTVGDGEETVSFGGWKGFVR. Residues 470–490 traverse the membrane as a helical segment; the sequence is FPFALVVATALTIGSVFLLAK. Over 491 to 493 the chain is Vacuolar; sequence VNP. Residues 494-514 traverse the membrane as a helical segment; the sequence is LIIYSSGYSVWAMMISLFYFV. Topologically, residues 515-532 are cytoplasmic; that stretch reads SWLLLRGAHFVRPSALQR. The helical transmembrane segment at 533–553 threads the bilayer; sequence GFTLIWLFIITWVLSVFAAVA. The Vacuolar segment spans residues 554–560; the sequence is EDRMNMG. Residues 561-581 traverse the membrane as a helical segment; that stretch reads AVYPLAFLHTFAFAAVLISLL. Topologically, residues 582-701 are cytoplasmic; sequence EQYALPAKQD…WSGRLPTWTW (120 aa). Positions 595 to 688 are disordered; sequence QVSGENEEEE…RKRSFPPYEN (94 aa). Acidic residues predominate over residues 599–608; it reads ENEEEEEQEQ. Residues 651–660 show a composition bias toward polar residues; the sequence is SSEQTTTFAN. The helical transmembrane segment at 702-722 threads the bilayer; the sequence is FIQLLLLVPLYVTVLGNLALV. The Vacuolar portion of the chain corresponds to 723-738; the sequence is QTTSIGKTGTDGSSLL. The helical transmembrane segment at 739–759 threads the bilayer; sequence APLMGVGILAILLLLPLTPFI. At 760-766 the chain is on the cytoplasmic side; sequence HRVSHHV. A helical transmembrane segment spans residues 767-787; the sequence is PLFLFLVFIGTLIYNLTAFPF. Residues 788-1032 lie on the Vacuolar side of the membrane; the sequence is SDNNRFKFYF…VEITKKIKVA (245 aa). Asn940 carries an N-linked (GlcNAc...) asparagine glycan.

It belongs to the peptidase M28 family. It depends on Zn(2+) as a cofactor.

It localises to the vacuole membrane. In terms of biological role, may be involved in vacuolar sorting and osmoregulation. This is Vacuolar membrane protease from Metarhizium robertsii (strain ARSEF 23 / ATCC MYA-3075) (Metarhizium anisopliae (strain ARSEF 23)).